A 211-amino-acid polypeptide reads, in one-letter code: Large ribosomal subunit protein uL3 (211 aa).

The span at 130-139 (QDATHGNSLS) shows a compositional bias: polar residues. Residues 130-151 (QDATHGNSLSHRAPGSIGQNQT) are disordered. Gln-150 is subject to N5-methylglutamine.

This sequence belongs to the universal ribosomal protein uL3 family. As to quaternary structure, part of the 50S ribosomal subunit. Forms a cluster with proteins L14 and L19. Methylated by PrmB.

Its function is as follows. One of the primary rRNA binding proteins, it binds directly near the 3'-end of the 23S rRNA, where it nucleates assembly of the 50S subunit. This is Large ribosomal subunit protein uL3 from Alcanivorax borkumensis (strain ATCC 700651 / DSM 11573 / NCIMB 13689 / SK2).